Here is a 215-residue protein sequence, read N- to C-terminus: MASEMEKADALLHTFSTASAFSSLGLGLFCFVADRVQQATFIQQHDWLRALSDSTTHCVIGMWSWAIVIGLRKRSDFCEVALAGFFASIIDLDHFFLAGSVSLKAATNLQRRPPLHCSTLIPVVALALKFLMQLLRLKDSWCFLPWMLFISWTSHHVRDGIRHGLWICPFGNTAPLPYWLYVVITASLPSVCSLIMCLTGTRQLMTTKHGIHIDV.

Transmembrane regions (helical) follow at residues 77–97, 114–134, and 178–198; these read FCEV…HFFL, PLHC…LMQL, and YWLY…IMCL.

It is found in the membrane. This Xenopus laevis (African clawed frog) protein is Transmembrane protein 267 (tmem267).